Reading from the N-terminus, the 417-residue chain is Sulfate adenylyltransferase (417 aa).

The protein belongs to the sulfate adenylyltransferase family.

It carries out the reaction sulfate + ATP + H(+) = adenosine 5'-phosphosulfate + diphosphate. It participates in sulfur metabolism; hydrogen sulfide biosynthesis; sulfite from sulfate: step 1/3. The sequence is that of Sulfate adenylyltransferase from Psychrobacter cryohalolentis (strain ATCC BAA-1226 / DSM 17306 / VKM B-2378 / K5).